The chain runs to 183 residues: MESSQMSNVFHATTIVCVRRGDKVAIAGDGQVTLGHTVMKSNARKVRRLGRDGQVLAGFAGAAADAFTLFELFEAKLEKHGQLSRAAVELAKDWRTERRLGKLEALLVVADKETSLVISGTGDVIEPEDGIVAIGSGGSYALSAARALMAHTALDARTIATEAIGIAGNICIYTNRNVVVDEL.

Thr13 is an active-site residue. Positions 168, 171, and 174 each coordinate Na(+).

Belongs to the peptidase T1B family. HslV subfamily. In terms of assembly, a double ring-shaped homohexamer of HslV is capped on each side by a ring-shaped HslU homohexamer. The assembly of the HslU/HslV complex is dependent on binding of ATP.

The protein resides in the cytoplasm. It catalyses the reaction ATP-dependent cleavage of peptide bonds with broad specificity.. With respect to regulation, allosterically activated by HslU binding. In terms of biological role, protease subunit of a proteasome-like degradation complex believed to be a general protein degrading machinery. The protein is ATP-dependent protease subunit HslV of Xylella fastidiosa (strain M23).